The sequence spans 467 residues: UDP-glycosyltransferase 90A2 (467 aa).

Residues Ser-289, 341–343 (VDQ), 358–366 (HCGWNSLTE), and 380–383 (AAEQ) contribute to the UDP-alpha-D-glucose site.

This sequence belongs to the UDP-glycosyltransferase family.

This chain is UDP-glycosyltransferase 90A2 (UGT90A2), found in Arabidopsis thaliana (Mouse-ear cress).